A 132-amino-acid polypeptide reads, in one-letter code: DNA-entry nuclease inhibitor (132 aa).

In terms of assembly, this protein is a subunit of a 75 kDa protein complex, which governs binding and entry of donor DNA. The complex is a tetramer of two subunits of the DNA-entry nuclease and two subunits of a competence-specific protein. Only the complex is able to bind ds- and ss-DNA.

The protein localises to the cell membrane. Its function is as follows. Plays a role in the competence of cells to be transformed. It inhibits the activity of the DNA-entry nuclease. The polypeptide is DNA-entry nuclease inhibitor (nin) (Bacillus subtilis (strain 168)).